Consider the following 211-residue polypeptide: Protein G12 (211 aa).

The first 19 residues, 1-19, serve as a signal peptide directing secretion; sequence MKIAAFVVACLVATSAVSC.

In Anopheles gambiae (African malaria mosquito), this protein is Protein G12.